We begin with the raw amino-acid sequence, 96 residues long: MNIRPLHDRVIVKRSEVESKSAGGIVLTGSAAEQSSRGEVLAVGNGRILENGNVMPLDVKVGDIVIFNEGYGVKKEKIDGEEVLILSESDLMAVVG.

It belongs to the GroES chaperonin family. In terms of assembly, heptamer of 7 subunits arranged in a ring. Interacts with the chaperonin GroEL.

Its subcellular location is the cytoplasm. Its function is as follows. Together with the chaperonin GroEL, plays an essential role in assisting protein folding. The GroEL-GroES system forms a nano-cage that allows encapsulation of the non-native substrate proteins and provides a physical environment optimized to promote and accelerate protein folding. GroES binds to the apical surface of the GroEL ring, thereby capping the opening of the GroEL channel. In Shewanella halifaxensis (strain HAW-EB4), this protein is Co-chaperonin GroES.